The sequence spans 311 residues: Putative S-adenosyl-L-methionine-dependent methyltransferase MMAR_0358 (311 aa).

Residues aspartate 132 and 161–162 contribute to the S-adenosyl-L-methionine site; that span reads DL.

The protein belongs to the UPF0677 family.

Exhibits S-adenosyl-L-methionine-dependent methyltransferase activity. This Mycobacterium marinum (strain ATCC BAA-535 / M) protein is Putative S-adenosyl-L-methionine-dependent methyltransferase MMAR_0358.